The chain runs to 614 residues: Sulfite reductase [NADPH] flavoprotein alpha-component (614 aa).

A Flavodoxin-like domain is found at 79–217 (LTIIFASQTG…AATEWRKQVL (139 aa)). FMN-binding positions include 85 to 90 (SQTGNA), 132 to 135 (STNG), and 168 to 177 (LGDSSYQFFC). An FAD-binding FR-type domain is found at 249–463 (EQPYTASLST…VEHNNNFKLP (215 aa)). FAD contacts are provided by residues T337, T371, 401–404 (RLYS), 419–421 (TVG), Y425, and 434–437 (GGAS). NADP(+) contacts are provided by residues 534-535 (SR), 540-544 (KVYVQ), and D576. Y614 provides a ligand contact to FAD.

This sequence belongs to the NADPH-dependent sulphite reductase flavoprotein subunit CysJ family. The protein in the N-terminal section; belongs to the flavodoxin family. In the C-terminal section; belongs to the flavoprotein pyridine nucleotide cytochrome reductase family. In terms of assembly, alpha(8)-beta(8). The alpha component is a flavoprotein, the beta component is a hemoprotein. Requires FAD as cofactor. The cofactor is FMN.

The catalysed reaction is hydrogen sulfide + 3 NADP(+) + 3 H2O = sulfite + 3 NADPH + 4 H(+). It functions in the pathway sulfur metabolism; hydrogen sulfide biosynthesis; hydrogen sulfide from sulfite (NADPH route): step 1/1. Functionally, component of the sulfite reductase complex that catalyzes the 6-electron reduction of sulfite to sulfide. This is one of several activities required for the biosynthesis of L-cysteine from sulfate. The flavoprotein component catalyzes the electron flow from NADPH -&gt; FAD -&gt; FMN to the hemoprotein component. The sequence is that of Sulfite reductase [NADPH] flavoprotein alpha-component from Vibrio cholerae serotype O1 (strain ATCC 39541 / Classical Ogawa 395 / O395).